Consider the following 561-residue polypeptide: Amidophosphoribosyltransferase 2, chloroplastic (561 aa).

Positions 1 to 27 (MAATSSISSSLSLNAKPNKLSNNNNNN) are enriched in low complexity. The disordered stretch occupies residues 1–36 (MAATSSISSSLSLNAKPNKLSNNNNNNKPHRFLRNP). The N-terminal 53 residues, 1 to 53 (MAATSSISSSLSLNAKPNKLSNNNNNNKPHRFLRNPFLNPSSSSFSPLPASIS), are a transit peptide targeting the chloroplast. The active-site Nucleophile is the Cys-87. A Glutamine amidotransferase type-2 domain is found at 87–307 (CGVVGIYGDS…PGEVLVVDKD (221 aa)). Residues Cys-323, Cys-469, Cys-520, and Cys-523 each contribute to the [4Fe-4S] cluster site.

In the C-terminal section; belongs to the purine/pyrimidine phosphoribosyltransferase family. The cofactor is [4Fe-4S] cluster. Mg(2+) serves as cofactor. In terms of tissue distribution, mostly expressed in leaves, and, to a lower extent, in cotyledons.

It localises to the plastid. It is found in the chloroplast stroma. The catalysed reaction is 5-phospho-beta-D-ribosylamine + L-glutamate + diphosphate = 5-phospho-alpha-D-ribose 1-diphosphate + L-glutamine + H2O. It functions in the pathway purine metabolism; IMP biosynthesis via de novo pathway; N(1)-(5-phospho-D-ribosyl)glycinamide from 5-phospho-alpha-D-ribose 1-diphosphate: step 1/2. Its activity is regulated as follows. Inhibited by the phenyltriazole acetic acid compound [5-(4-chlorophenyl)-1-isopropyl-1H-[1,2,4]triazol-3-yl]-acetic acid (DAS734), a bleaching herbicide. Its function is as follows. Catalyzes the first committed step of 'de novo purine biosynthesis from glutamine. Required for chloroplast biogenesis and cell division. Confers sensitivity to the phenyltriazole acetic acid compound [5-(4-chlorophenyl)-1-isopropyl-1H-[1,2,4]triazol-3-yl]-acetic acid (DAS734), a bleaching herbicide. The chain is Amidophosphoribosyltransferase 2, chloroplastic (ASE2) from Arabidopsis thaliana (Mouse-ear cress).